Here is a 121-residue protein sequence, read N- to C-terminus: Phosphoribosyl-ATP pyrophosphatase (121 aa).

The protein belongs to the PRA-PH family.

It localises to the cytoplasm. It catalyses the reaction 1-(5-phospho-beta-D-ribosyl)-ATP + H2O = 1-(5-phospho-beta-D-ribosyl)-5'-AMP + diphosphate + H(+). It functions in the pathway amino-acid biosynthesis; L-histidine biosynthesis; L-histidine from 5-phospho-alpha-D-ribose 1-diphosphate: step 2/9. The polypeptide is Phosphoribosyl-ATP pyrophosphatase (Burkholderia cenocepacia (strain HI2424)).